Reading from the N-terminus, the 598-residue chain is Aspartate--tRNA ligase (598 aa).

Residue E175 coordinates L-aspartate. The aspartate stretch occupies residues 199-202 (QLFK). R221 is an L-aspartate binding site. ATP-binding positions include 221–223 (RDE) and Q230. L-aspartate is bound at residue H450. E486 is an ATP binding site. R493 is a binding site for L-aspartate. An ATP-binding site is contributed by 538–541 (GLDR).

It belongs to the class-II aminoacyl-tRNA synthetase family. Type 1 subfamily. In terms of assembly, homodimer.

It is found in the cytoplasm. It carries out the reaction tRNA(Asp) + L-aspartate + ATP = L-aspartyl-tRNA(Asp) + AMP + diphosphate. In terms of biological role, catalyzes the attachment of L-aspartate to tRNA(Asp) in a two-step reaction: L-aspartate is first activated by ATP to form Asp-AMP and then transferred to the acceptor end of tRNA(Asp). The sequence is that of Aspartate--tRNA ligase from Lactiplantibacillus plantarum (strain ATCC BAA-793 / NCIMB 8826 / WCFS1) (Lactobacillus plantarum).